The sequence spans 356 residues: Nicotinate-nucleotide--dimethylbenzimidazole phosphoribosyltransferase (356 aa).

The Proton acceptor role is filled by E317.

It belongs to the CobT family. As to quaternary structure, homodimer.

It catalyses the reaction 5,6-dimethylbenzimidazole + nicotinate beta-D-ribonucleotide = alpha-ribazole 5'-phosphate + nicotinate + H(+). It functions in the pathway nucleoside biosynthesis; alpha-ribazole biosynthesis; alpha-ribazole from 5,6-dimethylbenzimidazole: step 1/2. Catalyzes the synthesis of alpha-ribazole-5'-phosphate from nicotinate mononucleotide (NAMN) and 5,6-dimethylbenzimidazole (DMB). This Salmonella gallinarum (strain 287/91 / NCTC 13346) protein is Nicotinate-nucleotide--dimethylbenzimidazole phosphoribosyltransferase.